We begin with the raw amino-acid sequence, 700 residues long: UvrABC system protein C (700 aa).

The GIY-YIG domain maps to 11–90 (TTPGVYLYKD…IKKHRPRYNI (80 aa)). The 36-residue stretch at 200-235 (TELIDMLRADMQAASDALEFEEAALLRDQLQAVERT) folds into the UVR domain.

This sequence belongs to the UvrC family. Interacts with UvrB in an incision complex.

Its subcellular location is the cytoplasm. Its function is as follows. The UvrABC repair system catalyzes the recognition and processing of DNA lesions. UvrC both incises the 5' and 3' sides of the lesion. The N-terminal half is responsible for the 3' incision and the C-terminal half is responsible for the 5' incision. This Oleidesulfovibrio alaskensis (strain ATCC BAA-1058 / DSM 17464 / G20) (Desulfovibrio alaskensis) protein is UvrABC system protein C.